The following is a 360-amino-acid chain: Photosystem II protein D1 2 (360 aa).

3 helical membrane passes run Y29–I46, H118–L133, and W142–A156. H118 contributes to the chlorophyll a binding site. Y126 serves as a coordination point for pheophytin a. Residues D170 and E189 each coordinate [CaMn4O5] cluster. A helical transmembrane segment spans residues F197–L218. H198 provides a ligand contact to chlorophyll a. Residues H215 and S264–F265 each bind a quinone. H215 contributes to the Fe cation binding site. H272 provides a ligand contact to Fe cation. Residues F274 to L288 traverse the membrane as a helical segment. [CaMn4O5] cluster is bound by residues H332, E333, D342, and A344. A propeptide spanning residues S345–A360 is cleaved from the precursor.

Belongs to the reaction center PufL/M/PsbA/D family. As to quaternary structure, PSII is composed of 1 copy each of membrane proteins PsbA, PsbB, PsbC, PsbD, PsbE, PsbF, PsbH, PsbI, PsbJ, PsbK, PsbL, PsbM, PsbT, PsbX, PsbY, PsbZ, Psb30/Ycf12, peripheral proteins PsbO, CyanoQ (PsbQ), PsbU, PsbV and a large number of cofactors. It forms dimeric complexes. The cofactor is The D1/D2 heterodimer binds P680, chlorophylls that are the primary electron donor of PSII, and subsequent electron acceptors. It shares a non-heme iron and each subunit binds pheophytin, quinone, additional chlorophylls, carotenoids and lipids. D1 provides most of the ligands for the Mn4-Ca-O5 cluster of the oxygen-evolving complex (OEC). There is also a Cl(-1) ion associated with D1 and D2, which is required for oxygen evolution. The PSII complex binds additional chlorophylls, carotenoids and specific lipids.. Tyr-161 forms a radical intermediate that is referred to as redox-active TyrZ, YZ or Y-Z. Post-translationally, C-terminally processed by CtpA; processing is essential to allow assembly of the oxygen-evolving complex and thus photosynthetic growth.

The protein resides in the cellular thylakoid membrane. The enzyme catalyses 2 a plastoquinone + 4 hnu + 2 H2O = 2 a plastoquinol + O2. Functionally, photosystem II (PSII) is a light-driven water:plastoquinone oxidoreductase that uses light energy to abstract electrons from H(2)O, generating O(2) and a proton gradient subsequently used for ATP formation. It consists of a core antenna complex that captures photons, and an electron transfer chain that converts photonic excitation into a charge separation. The D1/D2 (PsbA/PsbD) reaction center heterodimer binds P680, the primary electron donor of PSII as well as several subsequent electron acceptors. The protein is Photosystem II protein D1 2 of Synechococcus elongatus.